A 237-amino-acid chain; its full sequence is Large ribosomal subunit protein uL3 (237 aa).

Disordered stretches follow at residues 133-155 (ASHG…DPGK) and 213-237 (PENA…EGAE). Over residues 135–150 (HGNSITHRSHGSTGQR) the composition is skewed to polar residues. N5-methylglutamine is present on Gln-151. The span at 220–237 (AGLRAGAKAEAAATEGAE) shows a compositional bias: low complexity.

Belongs to the universal ribosomal protein uL3 family. Part of the 50S ribosomal subunit. Forms a cluster with proteins L14 and L19. Methylated by PrmB.

Its function is as follows. One of the primary rRNA binding proteins, it binds directly near the 3'-end of the 23S rRNA, where it nucleates assembly of the 50S subunit. The chain is Large ribosomal subunit protein uL3 from Brucella suis biovar 1 (strain 1330).